Reading from the N-terminus, the 534-residue chain is Thromboxane-A synthase (534 aa).

The Cytoplasmic segment spans residues Met1–Glu10. The helical transmembrane segment at Leu11 to Tyr31 threads the bilayer. The Lumenal segment spans residues Ser32–Gly75. The helical transmembrane segment at Pro76–Ile96 threads the bilayer. Residues Lys97–Arg223 lie on the Cytoplasmic side of the membrane. Residues Leu224 to Pro244 traverse the membrane as a helical segment. Residues Asn245 to Ala336 are Lumenal-facing. Residues Phe337–Leu357 traverse the membrane as a helical segment. The Cytoplasmic segment spans residues Leu358–Arg534. Residue Cys480 participates in heme binding.

This sequence belongs to the cytochrome P450 family. As to quaternary structure, monomer. Requires heme as cofactor. As to expression, expressed in lung, kidney and thymus.

Its subcellular location is the endoplasmic reticulum membrane. It catalyses the reaction prostaglandin H2 = thromboxane A2. The enzyme catalyses prostaglandin H2 = (12S)-hydroxy-(5Z,8E,10E)-heptadecatrienoate + malonaldehyde. It carries out the reaction a hydroperoxyeicosatetraenoate = an oxoeicosatetraenoate + H2O. The catalysed reaction is (15S)-hydroperoxy-(5Z,8Z,11Z,13E)-eicosatetraenoate = 15-oxo-(5Z,8Z,11Z,13E)-eicosatetraenoate + H2O. It catalyses the reaction (15S)-hydroperoxy-(5Z,8Z,11Z,13E)-eicosatetraenoate + AH2 = (15S)-hydroxy-(5Z,8Z,11Z,13E)-eicosatetraenoate + A + H2O. Its function is as follows. Catalyzes the conversion of prostaglandin H2 (PGH2) to thromboxane A2 (TXA2), a potent inducer of blood vessel constriction and platelet aggregation. Also cleaves PGH2 to 12-hydroxy-heptadecatrienoicacid (12-HHT) and malondialdehyde, which is known to act as a mediator of DNA damage. 12-HHT and malondialdehyde are formed stoichiometrically in the same amounts as TXA2. Additionally, displays dehydratase activity, toward (15S)-hydroperoxy-(5Z,8Z,11Z,13E)-eicosatetraenoate (15(S)-HPETE) producing 15-KETE and 15-HETE. The polypeptide is Thromboxane-A synthase (TBXAS1) (Sus scrofa (Pig)).